The chain runs to 401 residues: Argininosuccinate synthase (401 aa).

Residues 9–17 (AYSGGLDTS) and Ala36 contribute to the ATP site. L-citrulline contacts are provided by Tyr87 and Ser92. Residue Gly117 participates in ATP binding. Thr119, Asn123, and Asp124 together coordinate L-aspartate. An L-citrulline-binding site is contributed by Asn123. The L-citrulline site is built by Arg127, Ser176, Ser185, Glu261, and Tyr273.

This sequence belongs to the argininosuccinate synthase family. Type 1 subfamily. Homotetramer.

The protein localises to the cytoplasm. The enzyme catalyses L-citrulline + L-aspartate + ATP = 2-(N(omega)-L-arginino)succinate + AMP + diphosphate + H(+). Its pathway is amino-acid biosynthesis; L-arginine biosynthesis; L-arginine from L-ornithine and carbamoyl phosphate: step 2/3. This is Argininosuccinate synthase from Syntrophobacter fumaroxidans (strain DSM 10017 / MPOB).